A 495-amino-acid chain; its full sequence is Pleckstrin homology domain-containing family O member 2 (495 aa).

One can recognise a PH domain in the interval 18-120 (TADKAGWIKK…WIKALNEGIN (103 aa)). 2 positions are modified to phosphoserine: Ser-165 and Ser-168. The segment at 171–411 (LSRLDLDVPD…ESPQHPRLPK (241 aa)) is disordered. Residues 198–213 (QEPPRALMPPVKPSPG) are compositionally biased toward pro residues. At Thr-233 the chain carries Phosphothreonine. Residues 235 to 244 (DSASSGANPE) are compositionally biased toward polar residues. 5 positions are modified to phosphoserine: Ser-236, Ser-238, Ser-239, Ser-274, and Ser-292. Thr-296 carries the phosphothreonine modification. A compositionally biased stretch (low complexity) spans 324 to 335 (SGVDASGSSQSS). Over residues 336–350 (EAPETTSPEPTQVSV) the composition is skewed to polar residues. Ser-395 carries the post-translational modification Phosphoserine. Residues 399-411 (LLRESPQHPRLPK) are compositionally biased toward basic and acidic residues. Residues 444–469 (CAESLLSQAVEQLRQATQVLQEMRDL) adopt a coiled-coil conformation.

In Mus musculus (Mouse), this protein is Pleckstrin homology domain-containing family O member 2 (Plekho2).